We begin with the raw amino-acid sequence, 869 residues long: H(+)/Cl(-) exchange transporter 6 (869 aa).

The Cytoplasmic portion of the chain corresponds to 1 to 80 (MAGCRGSLCC…KKGRWYEVVK (80 aa)). 2 helical membrane-spanning segments follow: residues 81-113 (WTVV…FGVV) and 128-150 (LSLL…LVLI). The short motif at 156-160 (GSGIP) is the Selectivity filter part_1 element. S157 is a chloride binding site. The helical intramembrane region spans 159–166 (IPEIKCYL). 2 consecutive transmembrane segments (helical) span residues 176–194 (RLRT…VAGG) and 200–217 (EGPM…LPQF). The Selectivity filter part_2 signature appears at 198–202 (GKEGP). Intramembrane regions (helical) lie at residues 241 to 253 (FVSA…IAAA) and 257 to 265 (PIGATLFSL). The next 3 membrane-spanning stretches (helical) occupy residues 277–294 (TWKV…LNFF), 335–364 (GFFV…YRMR), and 371–392 (KLVR…VFVA). Residues N410, N422, and N432 are each glycosylated (N-linked (GlcNAc...) asparagine). Helical transmembrane passes span 462–481 (PITL…WTYG) and 487–511 (GLFV…KSYI). Positions 487 to 491 (GLFVP) match the Selectivity filter part_3 motif. F489 provides a ligand contact to chloride. The helical intramembrane region spans 519-533 (GTFSLIGAAALLGGV). An intramembrane region (note=Loop between two helices) is located at residues 534-536 (VRM). The segment at residues 537 to 548 (TISLTVILIEST) is an intramembrane region (helical). Residues 549–552 (NEIT) constitute an intramembrane region (note=Loop between two helices). Residues 553–571 (YGLPIMITLMVAKWTGDFF) form a helical membrane-spanning segment. At 572–869 (NKGIYDIHVG…ARLRQHYQTI (298 aa)) the chain is on the cytoplasmic side. Position 576 (Y576) interacts with chloride. The region spanning 605–662 (MEPNLTYVYPHTRIQSLVSILRTTVHHAFPVVTENRGNEKEFMKGNQLISNNIKFKKS) is the CBS 1 domain. 630–632 (HHA) serves as a coordination point for ATP. The interval 668–687 (AGEQRRRSQSMKSYPSSELR) is disordered. The segment covering 677–686 (SMKSYPSSEL) has biased composition (polar residues). The residue at position 773 (S773) is a Phosphoserine. Residues 807 to 868 (MNPSPFTVSP…QARLRQHYQT (62 aa)) form the CBS 2 domain. ATP is bound at residue 849–852 (TRHN).

The protein belongs to the chloride channel (TC 2.A.49) family. ClC-6/CLCN6 subfamily. Post-translationally, N-glycosylated on several asparagine residues.

Its subcellular location is the late endosome membrane. It carries out the reaction 2 chloride(in) + H(+)(out) = 2 chloride(out) + H(+)(in). In terms of biological role, voltage-gated channel mediating the exchange of chloride ions against protons. Functions as antiporter and contributes to the acidification of the late endosome lumen. The CLC channel family contains both chloride channels and proton-coupled anion transporters that exchange chloride or another anion for protons. The presence of conserved gating glutamate residues is typical for family members that function as antiporters. This Oryctolagus cuniculus (Rabbit) protein is H(+)/Cl(-) exchange transporter 6 (CLCN6).